A 238-amino-acid chain; its full sequence is Tritrans,polycis-undecaprenyl-diphosphate synthase (geranylgeranyl-diphosphate specific) (238 aa).

Aspartate 18 is a catalytic residue. Aspartate 18 is a Mg(2+) binding site. Substrate-binding positions include glycine 19–arginine 22 and serine 64–glutamate 66. The active-site Proton acceptor is the asparagine 67. Substrate contacts are provided by residues arginine 70, arginine 187, and arginine 193–serine 195. Glutamate 206 contributes to the Mg(2+) binding site.

It belongs to the UPP synthase family. As to quaternary structure, homodimer. The cofactor is Mg(2+).

The catalysed reaction is geranylgeranyl diphosphate + 7 isopentenyl diphosphate = tri-trans,hepta-cis-undecaprenyl diphosphate + 7 diphosphate. Catalyzes the sequential condensation of isopentenyl diphosphate (IPP) with geranylgeranyl diphosphate (GGPP) to yield (2Z,6Z,10Z,14Z,18Z,22Z,26Z,30E,34E,38E)-undecaprenyl diphosphate (tritrans,heptacis-UPP). It is probably the precursor of glycosyl carrier lipids. The polypeptide is Tritrans,polycis-undecaprenyl-diphosphate synthase (geranylgeranyl-diphosphate specific) (Pyrobaculum aerophilum (strain ATCC 51768 / DSM 7523 / JCM 9630 / CIP 104966 / NBRC 100827 / IM2)).